The sequence spans 266 residues: Imidazole glycerol phosphate synthase subunit HisF (266 aa).

Catalysis depends on residues aspartate 11 and aspartate 130. The segment at arginine 134–serine 157 is disordered.

The protein belongs to the HisA/HisF family. As to quaternary structure, heterodimer of HisH and HisF.

Its subcellular location is the cytoplasm. It catalyses the reaction 5-[(5-phospho-1-deoxy-D-ribulos-1-ylimino)methylamino]-1-(5-phospho-beta-D-ribosyl)imidazole-4-carboxamide + L-glutamine = D-erythro-1-(imidazol-4-yl)glycerol 3-phosphate + 5-amino-1-(5-phospho-beta-D-ribosyl)imidazole-4-carboxamide + L-glutamate + H(+). Its pathway is amino-acid biosynthesis; L-histidine biosynthesis; L-histidine from 5-phospho-alpha-D-ribose 1-diphosphate: step 5/9. IGPS catalyzes the conversion of PRFAR and glutamine to IGP, AICAR and glutamate. The HisF subunit catalyzes the cyclization activity that produces IGP and AICAR from PRFAR using the ammonia provided by the HisH subunit. In Paracidovorax citrulli (strain AAC00-1) (Acidovorax citrulli), this protein is Imidazole glycerol phosphate synthase subunit HisF.